A 402-amino-acid chain; its full sequence is MNFPSIQEQLDLITRNTVEIISVDELEQKLVSSQKSGKPLNIKLGADPSRPDLHLGHSVVLRKLRDFQDLGHHAILIIGNFTAMIGDPSGKSKTRPQLSAEEAAENGRSYFEQAIKILDAANTTLCSNADWLGAMTFADVIRLSSHYTVARMLERNDFEQRYRAQEPISIHEFLYPLAQGMDSVHLKNDVELGGTDQKFNLLVGRDLQREYGIAPQVCITMPLLVGTDGKDKMSKSLDNAISFTDTPNDMYGRALSIPDTLIETYSRLLLSQFGAALNEILSQIETNPRLAKRAMARHIVADYYSPEAASAAEEHFDKLFVHKQAPDNLELLELEATSMPIIDLLTLLGAAPSKSEARRMIQAKSVSIDDEKIEDFNAVIALEGEAKIVRAGKRKFFKIRSK.

Positions 48-57 match the 'HIGH' region motif; that stretch reads PSRPDLHLGH. The 'KMSKS' region motif lies at 232–236; sequence KMSKS. Residue Lys-235 coordinates ATP. The S4 RNA-binding domain occupies 339–402; it reads MPIIDLLTLL…KRKFFKIRSK (64 aa).

This sequence belongs to the class-I aminoacyl-tRNA synthetase family. TyrS type 2 subfamily. In terms of assembly, homodimer.

It is found in the cytoplasm. It carries out the reaction tRNA(Tyr) + L-tyrosine + ATP = L-tyrosyl-tRNA(Tyr) + AMP + diphosphate + H(+). In terms of biological role, catalyzes the attachment of tyrosine to tRNA(Tyr) in a two-step reaction: tyrosine is first activated by ATP to form Tyr-AMP and then transferred to the acceptor end of tRNA(Tyr). The protein is Tyrosine--tRNA ligase of Chlorobium chlorochromatii (strain CaD3).